We begin with the raw amino-acid sequence, 256 residues long: Chlorophyll a-b binding protein CP24 10B, chloroplastic (256 aa).

The N-terminal 45 residues, 1-45 (MTTTSATAVLNGLSSSFLTGGKKTQALLGAHVTARVTTPKRFVVA), are a transit peptide targeting the chloroplast. The next 2 membrane-spanning stretches (helical) occupy residues 106–126 (WAMAAVLGIFVGQAWSGIPWF) and 134–154 (AIAPFSFGSLLGTQLLLMGWV).

Belongs to the ELIP/psbS family.

It is found in the plastid. The protein resides in the chloroplast thylakoid membrane. This is Chlorophyll a-b binding protein CP24 10B, chloroplastic (CAP10B) from Solanum lycopersicum (Tomato).